The primary structure comprises 106 residues: Large ribosomal subunit protein bL21 (106 aa).

It belongs to the bacterial ribosomal protein bL21 family. As to quaternary structure, part of the 50S ribosomal subunit. Contacts protein L20.

Functionally, this protein binds to 23S rRNA in the presence of protein L20. This Streptomyces griseus subsp. griseus (strain JCM 4626 / CBS 651.72 / NBRC 13350 / KCC S-0626 / ISP 5235) protein is Large ribosomal subunit protein bL21.